We begin with the raw amino-acid sequence, 365 residues long: UDP-N-acetylglucosamine--N-acetylmuramyl-(pentapeptide) pyrophosphoryl-undecaprenol N-acetylglucosamine transferase (365 aa).

UDP-N-acetyl-alpha-D-glucosamine contacts are provided by residues 19-21 (TGG), Asn-131, Arg-170, Ser-201, Ile-255, 274-279 (ALTVTE), and Gln-300.

This sequence belongs to the glycosyltransferase 28 family. MurG subfamily.

The protein localises to the cell inner membrane. It carries out the reaction di-trans,octa-cis-undecaprenyl diphospho-N-acetyl-alpha-D-muramoyl-L-alanyl-D-glutamyl-meso-2,6-diaminopimeloyl-D-alanyl-D-alanine + UDP-N-acetyl-alpha-D-glucosamine = di-trans,octa-cis-undecaprenyl diphospho-[N-acetyl-alpha-D-glucosaminyl-(1-&gt;4)]-N-acetyl-alpha-D-muramoyl-L-alanyl-D-glutamyl-meso-2,6-diaminopimeloyl-D-alanyl-D-alanine + UDP + H(+). The protein operates within cell wall biogenesis; peptidoglycan biosynthesis. Cell wall formation. Catalyzes the transfer of a GlcNAc subunit on undecaprenyl-pyrophosphoryl-MurNAc-pentapeptide (lipid intermediate I) to form undecaprenyl-pyrophosphoryl-MurNAc-(pentapeptide)GlcNAc (lipid intermediate II). This is UDP-N-acetylglucosamine--N-acetylmuramyl-(pentapeptide) pyrophosphoryl-undecaprenol N-acetylglucosamine transferase from Acinetobacter baylyi (strain ATCC 33305 / BD413 / ADP1).